A 245-amino-acid chain; its full sequence is Ribosomal RNA large subunit methyltransferase E (245 aa).

S-adenosyl-L-methionine is bound by residues Gly83, Trp85, Asp111, Asp127, and Asp156. Lys196 functions as the Proton acceptor in the catalytic mechanism.

This sequence belongs to the class I-like SAM-binding methyltransferase superfamily. RNA methyltransferase RlmE family.

It is found in the cytoplasm. It carries out the reaction uridine(2552) in 23S rRNA + S-adenosyl-L-methionine = 2'-O-methyluridine(2552) in 23S rRNA + S-adenosyl-L-homocysteine + H(+). Its function is as follows. Specifically methylates the uridine in position 2552 of 23S rRNA at the 2'-O position of the ribose in the fully assembled 50S ribosomal subunit. This Polaromonas naphthalenivorans (strain CJ2) protein is Ribosomal RNA large subunit methyltransferase E.